We begin with the raw amino-acid sequence, 69 residues long: Large ribosomal subunit protein bL31 (69 aa).

Zn(2+) is bound by residues Cys-17, Cys-19, Cys-37, and Cys-40.

Belongs to the bacterial ribosomal protein bL31 family. Type A subfamily. As to quaternary structure, part of the 50S ribosomal subunit. Zn(2+) is required as a cofactor.

Binds the 23S rRNA. The protein is Large ribosomal subunit protein bL31 of Caldicellulosiruptor bescii (strain ATCC BAA-1888 / DSM 6725 / KCTC 15123 / Z-1320) (Anaerocellum thermophilum).